Consider the following 71-residue polypeptide: UPF0346 protein SUB0487 (71 aa).

Belongs to the UPF0346 family.

The protein is UPF0346 protein SUB0487 of Streptococcus uberis (strain ATCC BAA-854 / 0140J).